A 365-amino-acid chain; its full sequence is Cyclin-D5-2 (365 aa).

This sequence belongs to the cyclin family. Cyclin D subfamily.

The protein is Cyclin-D5-2 (CYCD5-2) of Oryza sativa subsp. japonica (Rice).